We begin with the raw amino-acid sequence, 321 residues long: Phosphoenolpyruvate transferase (321 aa).

A 7,8-didemethyl-8-hydroxy-5-deazariboflavin-binding site is contributed by Asp-51.

This sequence belongs to the CofD family. As to quaternary structure, homodimer. Mg(2+) serves as cofactor.

It carries out the reaction enolpyruvoyl-2-diphospho-5'-guanosine + 7,8-didemethyl-8-hydroxy-5-deazariboflavin = dehydro coenzyme F420-0 + GMP + H(+). It functions in the pathway cofactor biosynthesis; coenzyme F420 biosynthesis. In terms of biological role, catalyzes the transfer of the phosphoenolpyruvate moiety from enoylpyruvoyl-2-diphospho-5'-guanosine (EPPG) to 7,8-didemethyl-8-hydroxy-5-deazariboflavin (FO) with the formation of dehydro coenzyme F420-0 and GMP. The protein is Phosphoenolpyruvate transferase of Kitasatospora aureofaciens (Streptomyces aureofaciens).